The following is a 198-amino-acid chain: Imidazoleglycerol-phosphate dehydratase (198 aa).

This sequence belongs to the imidazoleglycerol-phosphate dehydratase family.

It is found in the cytoplasm. It carries out the reaction D-erythro-1-(imidazol-4-yl)glycerol 3-phosphate = 3-(imidazol-4-yl)-2-oxopropyl phosphate + H2O. It functions in the pathway amino-acid biosynthesis; L-histidine biosynthesis; L-histidine from 5-phospho-alpha-D-ribose 1-diphosphate: step 6/9. This Methylobacillus flagellatus (strain ATCC 51484 / DSM 6875 / VKM B-1610 / KT) protein is Imidazoleglycerol-phosphate dehydratase.